The chain runs to 485 residues: dTDP-4-amino-4,6-dideoxy-D-glucose ammonia-lyase (485 aa).

Residues C141, C145, and C148 each contribute to the [4Fe-4S] cluster site.

This sequence belongs to the radical SAM superfamily. DesII family. In terms of assembly, monomer. [4Fe-4S] cluster is required as a cofactor.

The enzyme catalyses dTDP-4-amino-4,6-dideoxy-alpha-D-glucose + AH2 + S-adenosyl-L-methionine = dTDP-3-dehydro-4,6-dideoxy-alpha-D-glucose + 5'-deoxyadenosine + L-methionine + A + NH4(+) + H(+). Functionally, involved in the biosynthesis of dTDP-alpha-D-desosamine, a sugar found in several bacterial macrolide antibiotics. Catalyzes the SAM-dependent deamination of dTDP-4-amino-4,6-deoxyglucose (dTDP-viosamine) to yield dTDP-3-keto-4,6-deoxyglucose. It can also catalyze the oxidative dehydrogenation of the non-physiological substrate dTDP-D-quinovose to dTDP-3-keto-6-deoxy-d-glucose. It can also deaminate dTDP-3-amino-3,6-deoxyglucose. This chain is dTDP-4-amino-4,6-dideoxy-D-glucose ammonia-lyase, found in Streptomyces venezuelae.